An 886-amino-acid chain; its full sequence is Adhesion G protein-coupled receptor E1 (886 aa).

Positions 1–20 (MRGFNLLLFWGCCVMHSWEG) are cleaved as a signal peptide. The Extracellular portion of the chain corresponds to 21-599 (HIRPTRKPNT…IMASGELTMD (579 aa)). The 49-residue stretch at 31–79 (KGNNCRDSTLCPAYATCTNTVDSYYCACKQGFLSSNGQNHFKDPGVRCK) folds into the EGF-like 1 domain. Cystine bridges form between Cys35-Cys47, Cys41-Cys56, Cys58-Cys78, Cys84-Cys97, Cys91-Cys106, Cys108-Cys130, Cys136-Cys148, Cys142-Cys157, Cys159-Cys170, Cys176-Cys188, Cys182-Cys197, Cys199-Cys219, Cys225-Cys235, Cys229-Cys244, Cys246-Cys266, Cys272-Cys285, Cys279-Cys294, and Cys296-Cys315. The region spanning 80–131 (DIDECSQSPQPCGPNSSCKNLSGRYKCSCLDGFSSPTGNDWVPGKPGNFSCT) is the EGF-like 2; calcium-binding domain. Asn94, Asn99, and Asn127 each carry an N-linked (GlcNAc...) asparagine glycan. One can recognise an EGF-like 3; calcium-binding domain in the interval 132 to 171 (DINECLTSSVCPEHSDCVNSMGSYSCSCQVGFISRNSTCE). N-linked (GlcNAc...) asparagine glycosylation occurs at Asn167. Residues 172 to 220 (DVDECADPRACPEHATCNNTVGNYSCFCNPGFESSSGHLSFQGLKASCE) form the EGF-like 4; calcium-binding domain. Asn189 and Asn194 each carry an N-linked (GlcNAc...) asparagine glycan. The region spanning 221 to 267 (DIDECTEMCPINSTCTNTPGSYFCTCHPGFAPSNGQLNFTDQGVECR) is the EGF-like 5; calcium-binding domain. Asn232 and Asn258 each carry an N-linked (GlcNAc...) asparagine glycan. Residues 268-316 (DIDECRQDPSTCGPNSICTNALGSYSCGCIAGFHPNPEGSQKDGNFSCQ) form the EGF-like 6; calcium-binding domain. 4 N-linked (GlcNAc...) asparagine glycosylation sites follow: Asn312, Asn366, Asn375, and Asn448. One can recognise a GAIN-B domain in the interval 431-597 (EYLDIESKVI…AVIMASGELT (167 aa)). Intrachain disulfides connect Cys550–Cys579 and Cys567–Cys581. The tract at residues 550-597 (CVSWSTDVKGGRWTSFGCVILEASETYTICSCNQMANLAVIMASGELT) is GPS. A helical membrane pass occupies residues 600–627 (FSLYIISHVGIIISLVCLVLAIATFLLC). The Cytoplasmic segment spans residues 628-634 (RSIRNHN). The helical transmembrane segment at 635-656 (TYLHLHLCVCLLLAKTLFLAGI) threads the bilayer. Over 657–666 (HKTDNKMGCA) the chain is Extracellular. The helical transmembrane segment at 667-690 (IIAGFLHYLFLACFFWMLVEAVIL) threads the bilayer. The Cytoplasmic segment spans residues 691–709 (FLMVRNLKVVNYFSSRNIK). A helical membrane pass occupies residues 710 to 731 (MLHICAFGYGLPMLVVVISASV). Over 732–747 (QPQGYGMHNRCWLNTE) the chain is Extracellular. A helical membrane pass occupies residues 748–776 (TGFIWSFLGPVCTVIVINSLLLTWTLWIL). Residues 777-794 (RQRLSSVNAEVSTLKDTR) lie on the Cytoplasmic side of the membrane. Residues 795 to 814 (LLTFKAFAQLFILGCSWVLG) form a helical membrane-spanning segment. The Extracellular portion of the chain corresponds to 815–829 (IFQIGPVAGVMAYLF). A helical membrane pass occupies residues 830 to 852 (TIINSLQGAFIFLIHCLLNGQVR). Topologically, residues 853–886 (EEYKRWITGKTKPSSQSQTSRILLSSMPSASKTG) are cytoplasmic. Residues 862-886 (KTKPSSQSQTSRILLSSMPSASKTG) are disordered. Residues 863-886 (TKPSSQSQTSRILLSSMPSASKTG) are compositionally biased toward polar residues.

It belongs to the G-protein coupled receptor 2 family. Adhesion G-protein coupled receptor (ADGR) subfamily. As to expression, expression is restricted to eosinophils.

Its subcellular location is the cell membrane. In terms of biological role, orphan receptor involved in cell adhesion and probably in cell-cell interactions specifically involving cells of the immune system. May play a role in regulatory T-cells (Treg) development. The chain is Adhesion G protein-coupled receptor E1 from Homo sapiens (Human).